Reading from the N-terminus, the 589-residue chain is NADP-dependent malic enzyme (589 aa).

Catalysis depends on Tyr137, which acts as the Proton donor. NAD(+) is bound at residue Arg190. Lys208 (proton acceptor) is an active-site residue. A divalent metal cation contacts are provided by Glu280, Asp281, and Asp304. Residue Asp304 participates in NAD(+) binding. 333-349 (LFLGAGEAGTGIAELIA) is a binding site for NADP(+). Asn445 lines the NAD(+) pocket.

This sequence belongs to the malic enzymes family. Homotetramer. Mg(2+) is required as a cofactor. Requires Mn(2+) as cofactor.

Its subcellular location is the cytoplasm. The enzyme catalyses (S)-malate + NADP(+) = pyruvate + CO2 + NADPH. It catalyses the reaction oxaloacetate + H(+) = pyruvate + CO2. This is NADP-dependent malic enzyme (ME1) from Phaseolus vulgaris (Kidney bean).